We begin with the raw amino-acid sequence, 262 residues long: Probable dihydroorotate dehydrogenase B (NAD(+)), electron transfer subunit (262 aa).

An FAD-binding FR-type domain is found at 4 to 97 (VKPIPAEVVE…RGPYGKPFEV (94 aa)). Cysteine 217, cysteine 222, cysteine 225, and cysteine 234 together coordinate [2Fe-2S] cluster.

Belongs to the PyrK family. Heterotetramer of 2 PyrK and 2 PyrD type B subunits. The cofactor is [2Fe-2S] cluster. It depends on FAD as a cofactor.

It participates in pyrimidine metabolism; UMP biosynthesis via de novo pathway; orotate from (S)-dihydroorotate (NAD(+) route): step 1/1. In terms of biological role, responsible for channeling the electrons from the oxidation of dihydroorotate from the FMN redox center in the PyrD type B subunit to the ultimate electron acceptor NAD(+). The chain is Probable dihydroorotate dehydrogenase B (NAD(+)), electron transfer subunit from Methanopyrus kandleri (strain AV19 / DSM 6324 / JCM 9639 / NBRC 100938).